The sequence spans 393 residues: Protein FAM47E (393 aa).

Positions 326 to 354 (VSHKAQEENFKKELQEQEELLADLHGTVA) form a coiled coil.

It belongs to the FAM47 family. As to quaternary structure, interacts with PRMT5; the interaction is direct. Interacts with WDR77.

It localises to the nucleus. The protein resides in the chromosome. It is found in the cytoplasm. Its function is as follows. Promotes histone methylation by localizing the arginine methyltransferase PRMT5 to chromatin. The protein is Protein FAM47E (FAM47E) of Homo sapiens (Human).